A 210-amino-acid chain; its full sequence is Thiamine-phosphate synthase 2 (210 aa).

4-amino-2-methyl-5-(diphosphooxymethyl)pyrimidine contacts are provided by residues 38-42 (QLREK) and Asp70. 2 residues coordinate Mg(2+): Asp71 and Glu90. 4-amino-2-methyl-5-(diphosphooxymethyl)pyrimidine is bound at residue Thr109. 135–137 (TTT) provides a ligand contact to 2-[(2R,5Z)-2-carboxy-4-methylthiazol-5(2H)-ylidene]ethyl phosphate. 4-amino-2-methyl-5-(diphosphooxymethyl)pyrimidine is bound at residue Lys138. Gly165 contributes to the 2-[(2R,5Z)-2-carboxy-4-methylthiazol-5(2H)-ylidene]ethyl phosphate binding site.

This sequence belongs to the thiamine-phosphate synthase family. Requires Mg(2+) as cofactor.

The catalysed reaction is 2-[(2R,5Z)-2-carboxy-4-methylthiazol-5(2H)-ylidene]ethyl phosphate + 4-amino-2-methyl-5-(diphosphooxymethyl)pyrimidine + 2 H(+) = thiamine phosphate + CO2 + diphosphate. It carries out the reaction 2-(2-carboxy-4-methylthiazol-5-yl)ethyl phosphate + 4-amino-2-methyl-5-(diphosphooxymethyl)pyrimidine + 2 H(+) = thiamine phosphate + CO2 + diphosphate. The enzyme catalyses 4-methyl-5-(2-phosphooxyethyl)-thiazole + 4-amino-2-methyl-5-(diphosphooxymethyl)pyrimidine + H(+) = thiamine phosphate + diphosphate. It functions in the pathway cofactor biosynthesis; thiamine diphosphate biosynthesis; thiamine phosphate from 4-amino-2-methyl-5-diphosphomethylpyrimidine and 4-methyl-5-(2-phosphoethyl)-thiazole: step 1/1. Condenses 4-methyl-5-(beta-hydroxyethyl)thiazole monophosphate (THZ-P) and 2-methyl-4-amino-5-hydroxymethyl pyrimidine pyrophosphate (HMP-PP) to form thiamine monophosphate (TMP). This is Thiamine-phosphate synthase 2 from Streptococcus pneumoniae serotype 4 (strain ATCC BAA-334 / TIGR4).